Here is a 422-residue protein sequence, read N- to C-terminus: Pre-B-cell leukemia transcription factor 2 (422 aa).

The segment at 1–43 is disordered; that stretch reads MDEQGRLMQARGVGIPGHPIHGGPQTLTPHPMHEPPADNGEPR. Residues 31-43 are compositionally biased toward basic and acidic residues; sequence PMHEPPADNGEPR. A PBC domain is found at 42-236; sequence PRKQDIGDIL…VMILRSRFLD (195 aa). The interval 49 to 128 is PBC-A; it reads DILQQIMTIT…EGVAGPEKGG (80 aa). The PBC-B stretch occupies residues 131-236; that stretch reads AAAAAAAAAS…VMILRSRFLD (106 aa). A DNA-binding region (homeobox) is located at residues 237 to 299; sequence ARRKRRNFSK…NKRIRYKKNI (63 aa). Disordered stretches follow at residues 319–341 and 353–422; these read QGGH…GSFN and QGLN…DTSN. The span at 401 to 410 shows a compositional bias: polar residues; sequence VTPSSVTSPT.

Belongs to the TALE/PBX homeobox family.

The protein resides in the nucleus. Its function is as follows. Transcriptional activator that binds the sequence 5'-ATCAATCAA-3'. This chain is Pre-B-cell leukemia transcription factor 2, found in Xenopus tropicalis (Western clawed frog).